The following is a 1119-amino-acid chain: Protein translocase subunit SecA (1119 aa).

ATP contacts are provided by residues glutamine 177, 195-199, and aspartate 692; that span reads GEGKT. Residues 1025–1081 form a disordered region; the sequence is APSIHEARQTKSKEKVETRKEEIPNMDERAAQSRAAGNTQRQQPEVTETIVRDRPKI. A compositionally biased stretch (basic and acidic residues) spans 1029–1055; it reads HEARQTKSKEKVETRKEEIPNMDERAA. Residues 1059 to 1070 are compositionally biased toward polar residues; that stretch reads AAGNTQRQQPEV.

This sequence belongs to the SecA family. In terms of assembly, monomer and homodimer. Part of the essential Sec protein translocation apparatus which comprises SecA, SecYEG and auxiliary proteins SecDF. Other proteins may also be involved.

The protein localises to the cell inner membrane. Its subcellular location is the cytoplasm. It carries out the reaction ATP + H2O + cellular proteinSide 1 = ADP + phosphate + cellular proteinSide 2.. Its function is as follows. Part of the Sec protein translocase complex. Interacts with the SecYEG preprotein conducting channel. Has a central role in coupling the hydrolysis of ATP to the transfer of proteins into and across the cell membrane, serving as an ATP-driven molecular motor driving the stepwise translocation of polypeptide chains across the membrane. This Christiangramia forsetii (strain DSM 17595 / CGMCC 1.15422 / KT0803) (Gramella forsetii) protein is Protein translocase subunit SecA.